A 315-amino-acid polypeptide reads, in one-letter code: Beta-carotene hydroxylase 1, chloroplastic (315 aa).

Residues 1 to 58 (MAAEISISASSRAICLQRNPFPAPKYFATAPPLLFFSPLTCNLDAILRSRRKPRLAAC) constitute a chloroplast transit peptide. 2 helical membrane passes run 112-132 (YLVA…ISVY) and 146-166 (FSEM…MEYW). In terms of domain architecture, Fatty acid hydroxylase spans 159–286 (AAIGMEYWAR…KFDGVPYGLF (128 aa)). The Histidine box-1 motif lies at 171 to 176 (HRALWH). A Histidine box-2 motif is present at residues 183–187 (HESHH). The next 2 membrane-spanning stretches (helical) occupy residues 196-216 (LNDI…SFGF) and 222-242 (IPGL…AYMF). Positions 244–249 (HDGLVH) match the Histidine box-3 motif. Positions 270 to 274 (HQLHH) match the Histidine box-4 motif.

Belongs to the sterol desaturase family.

The protein resides in the plastid. It localises to the chloroplast membrane. The catalysed reaction is all-trans-beta-carotene + 4 reduced [2Fe-2S]-[ferredoxin] + 2 O2 + 4 H(+) = all-trans-zeaxanthin + 4 oxidized [2Fe-2S]-[ferredoxin] + 2 H2O. It carries out the reaction all-trans-beta-carotene + 2 reduced [2Fe-2S]-[ferredoxin] + O2 + 2 H(+) = beta-cryptoxanthin + 2 oxidized [2Fe-2S]-[ferredoxin] + H2O. It catalyses the reaction beta-cryptoxanthin + 2 reduced [2Fe-2S]-[ferredoxin] + O2 + 2 H(+) = all-trans-zeaxanthin + 2 oxidized [2Fe-2S]-[ferredoxin] + H2O. With respect to regulation, inhibited by o-phenanthroline and 8-hydroxyquinoline. Nonheme diiron monooxygenase involved in the biosynthesis of xanthophylls. Specific for beta-ring hydroxylations of beta-carotene. Produces beta-cryptoxanthin and zeaxanthin. Uses ferredoxin as an electron donor. The sequence is that of Beta-carotene hydroxylase 1, chloroplastic from Capsicum annuum (Capsicum pepper).